Here is a 955-residue protein sequence, read N- to C-terminus: Iron-responsive element-binding protein 2 (955 aa).

3 residues coordinate [4Fe-4S] cluster: Cys-504, Cys-570, and Cys-573.

It belongs to the aconitase/IPM isomerase family. [4Fe-4S] cluster serves as cofactor. Post-translationally, ubiquitinated and degraded by the proteasome in presence of high level of iron and oxygen.

Its subcellular location is the cytoplasm. RNA-binding protein that binds to iron-responsive elements (IRES), which are stem-loop structures found in the 5'-UTR of ferritin, and delta aminolevulinic acid synthase mRNAs, and in the 3'-UTR of transferrin receptor mRNA. Binding to the IRE element in ferritin results in the repression of its mRNA translation. Binding of the protein to the transferrin receptor mRNA inhibits the degradation of this otherwise rapidly degraded mRNA. This is Iron-responsive element-binding protein 2 (ireb2) from Xenopus laevis (African clawed frog).